The sequence spans 638 residues: ATP-dependent zinc metalloprotease FtsH (638 aa).

Topologically, residues 1–7 (MRSTYKT) are cytoplasmic. Residues 8-28 (IGLWVILIVLFVAFYNFFSQG) traverse the membrane as a helical segment. Topologically, residues 29-102 (NDQVQEPSFT…KYEREEQNSL (74 aa)) are periplasmic. The helical transmembrane segment at 103-123 (WLTILGQWMPVVFLFLFFIFF) threads the bilayer. At 124–638 (MRQLQGGSGK…GLPAMEPKKA (515 aa)) the chain is on the cytoplasmic side. 195–202 (GSPGTGKT) lines the ATP pocket. A Zn(2+)-binding site is contributed by His-417. The active site involves Glu-418. Zn(2+) is bound by residues His-421 and Asp-493. The tract at residues 596–638 (GGQLTRERPPPRVNAPPKATEKKDKRKILDALEGLPAMEPKKA) is disordered. The segment covering 614-625 (ATEKKDKRKILD) has biased composition (basic and acidic residues).

This sequence in the central section; belongs to the AAA ATPase family. It in the C-terminal section; belongs to the peptidase M41 family. As to quaternary structure, homohexamer. Zn(2+) serves as cofactor.

Its subcellular location is the cell inner membrane. Acts as a processive, ATP-dependent zinc metallopeptidase for both cytoplasmic and membrane proteins. Plays a role in the quality control of integral membrane proteins. This Myxococcus xanthus (strain DK1622) protein is ATP-dependent zinc metalloprotease FtsH.